A 406-amino-acid polypeptide reads, in one-letter code: Phosphorylase b kinase gamma catalytic chain, liver/testis isoform (406 aa).

Residues 24 to 291 form the Protein kinase domain; the sequence is YDPKDIIGRG…AEQALQHPFF (268 aa). ATP is bound by residues 30-38 and lysine 53; that span reads IGRGVSSVV. Aspartate 153 functions as the Proton acceptor in the catalytic mechanism. A calmodulin-binding (domain-N) region spans residues 306-330; the sequence is QRFRVAVWTILAAGRVALSSHRLRP. A calmodulin-binding (domain-C) region spans residues 346–370; it reads VRRLIDNCAFRLYGHWVKKGEQQNR.

This sequence belongs to the protein kinase superfamily. CAMK Ser/Thr protein kinase family. Hexadecamer of 4 heterotetramers, each composed of alpha, beta, gamma, and delta subunits. Alpha (PHKA1 or PHKA2) and beta (PHKB) are regulatory subunits, gamma (PHKG1 or PHKG2) is the catalytic subunit, and delta is calmodulin.

It carries out the reaction 2 ATP + phosphorylase b = 2 ADP + phosphorylase a.. Functionally, catalytic subunit of the phosphorylase b kinase (PHK), which mediates the neural and hormonal regulation of glycogen breakdown (glycogenolysis) by phosphorylating and thereby activating glycogen phosphorylase. May regulate glycogeneolysis in the testis. In vitro, phosphorylates PYGM. The sequence is that of Phosphorylase b kinase gamma catalytic chain, liver/testis isoform (Phkg2) from Mus musculus (Mouse).